Consider the following 396-residue polypeptide: NAD(P)H oxidoreductase RTN4IP1, mitochondrial (396 aa).

The N-terminal 40 residues, methionine 1 to serine 40, are a transit peptide targeting the mitochondrion. An Enoyl reductase (ER) domain is found at glycine 52 to isoleucine 393. 12 residues coordinate NADPH: serine 214, glycine 216, valine 217, serine 237, tyrosine 255, asparagine 276, leucine 300, alanine 341, phenylalanine 343, histidine 386, alanine 387, and arginine 388.

This sequence belongs to the zinc-containing alcohol dehydrogenase family. Quinone oxidoreductase subfamily. In terms of assembly, interacts with RTN4, UQCRC1 and UQCRC2. As to expression, widely expressed in mitochondria-enriched tissues. Found in heart, muscle, kidney, liver, brain and placenta.

The protein localises to the mitochondrion matrix. It localises to the mitochondrion outer membrane. It carries out the reaction a 3-demethylubiquinone + NADH + 2 H(+) = a 3-demethylubiquinol + NAD(+). The enzyme catalyses a 3-demethylubiquinone + NADPH + 2 H(+) = a 3-demethylubiquinol + NADP(+). It catalyses the reaction 3-demethylubiquinone-10 + NADH + 2 H(+) = 3-demethylubiquinol-10 + NAD(+). The catalysed reaction is 3-demethylubiquinone-10 + NADPH + 2 H(+) = 3-demethylubiquinol-10 + NADP(+). The protein operates within cofactor biosynthesis; ubiquinone biosynthesis. In terms of biological role, NAD(P)H oxidoreductase involved in the ubiquinone biosynthetic pathway. Required for the O-methyltransferase activity of COQ3. Able to catalyze the oxidoreduction of 3-demethylubiquinone into 3-demethylubiquinol in vitro. However, it is unclear if 3-demethylubiquinone constitutes a substrate in vivo. May also play a role in the regulation of retinal ganglion cell (RGC) neurite outgrowth, and hence in the development of the inner retina and optic nerve. Appears to be a potent inhibitor of regeneration following spinal cord injury. This is NAD(P)H oxidoreductase RTN4IP1, mitochondrial from Homo sapiens (Human).